A 273-amino-acid polypeptide reads, in one-letter code: Major prion protein homolog (273 aa).

An N-terminal signal peptide occupies residues 1–24 (MARLLTTCCLLALLLAACTDVALS). A disordered region spans residues 25 to 121 (KKGKGKPSGG…QKPWKPPKTN (97 aa)). 8 consecutive repeat copies span residues 42 to 47 (RQPSYP), 48 to 53 (RQPGYP), 54 to 59 (HNPGYP), 60 to 65 (HNPGYP), 66 to 71 (HNPGYP), 72 to 77 (HNPGYP), 78 to 83 (HNPGYP), and 84 to 89 (QNPGYP). The 8 X 6 AA tandem repeats of [HR]-[NQ]-P-G-Y-P stretch occupies residues 42 to 89 (RQPSYPRQPGYPHNPGYPHNPGYPHNPGYPHNPGYPHNPGYPQNPGYP). A compositionally biased stretch (low complexity) spans 51–94 (GYPHNPGYPHNPGYPHNPGYPHNPGYPHNPGYPQNPGYPHNPGY). Cu(2+)-binding residues include His66, His72, and His78. Residues His90 and Gly93 each coordinate Cu(2+). The span at 101–111 (YNPSSGGSYHN) shows a compositional bias: polar residues. Residues Cys192 and Cys237 are joined by a disulfide bond. N-linked (GlcNAc...) asparagine glycosylation is found at Asn194, Asn209, and Asn218. Ser248 carries the GPI-anchor amidated serine lipid modification. Residues 249–273 (GIQLHPADTWLAVLLLLLTTLFAMH) constitute a propeptide, removed in mature form.

It belongs to the prion family. As to quaternary structure, monomer and homodimer. Has a tendency to aggregate into amyloid fibrils containing a cross-beta spine, formed by a steric zipper of superposed beta-strands. Soluble oligomers may represent an intermediate stage on the path to fibril formation. Copper binding may promote oligomerization. As to expression, spinal cord and brain.

The protein resides in the cell membrane. Its primary physiological function is unclear. Has cytoprotective activity against internal or environmental stresses. May play a role in neuronal development and synaptic plasticity. May be required for neuronal myelin sheath maintenance. May play a role in iron uptake and iron homeostasis. Soluble oligomers are toxic to cultured neuroblastoma cells and induce apoptosis (in vitro). Association with GPC1 (via its heparan sulfate chains) targets PRNP to lipid rafts. Also provides Cu(2+) or Zn(2+) for the ascorbate-mediated GPC1 deaminase degradation of its heparan sulfate side chains. This is Major prion protein homolog (PRNP) from Gallus gallus (Chicken).